Here is an 863-residue protein sequence, read N- to C-terminus: Valine--tRNA ligase (863 aa).

The short motif at proline 43–histidine 53 is the 'HIGH' region element. Residues lysine 517–serine 521 carry the 'KMSKS' region motif. Lysine 520 is an ATP binding site.

The protein belongs to the class-I aminoacyl-tRNA synthetase family. ValS type 2 subfamily.

The protein resides in the cytoplasm. It catalyses the reaction tRNA(Val) + L-valine + ATP = L-valyl-tRNA(Val) + AMP + diphosphate. In terms of biological role, catalyzes the attachment of valine to tRNA(Val). As ValRS can inadvertently accommodate and process structurally similar amino acids such as threonine, to avoid such errors, it has a 'posttransfer' editing activity that hydrolyzes mischarged Thr-tRNA(Val) in a tRNA-dependent manner. This is Valine--tRNA ligase from Archaeoglobus fulgidus (strain ATCC 49558 / DSM 4304 / JCM 9628 / NBRC 100126 / VC-16).